Here is a 61-residue protein sequence, read N- to C-terminus: Large ribosomal subunit protein uL30 (61 aa).

Belongs to the universal ribosomal protein uL30 family. Part of the 50S ribosomal subunit.

In Frankia casuarinae (strain DSM 45818 / CECT 9043 / HFP020203 / CcI3), this protein is Large ribosomal subunit protein uL30.